Reading from the N-terminus, the 268-residue chain is Testis-specific serine/threonine-protein kinase 3 (268 aa).

In terms of domain architecture, Protein kinase spans 10-265 (YQLGKTIGEG…IEEVSWHPWL (256 aa)). ATP contacts are provided by residues 16 to 24 (IGEGTYSKV) and Lys-39. Catalysis depends on Asp-134, which acts as the Proton acceptor. At Ser-166 the chain carries Phosphoserine. Position 168 is a phosphothreonine (Thr-168).

The protein belongs to the protein kinase superfamily. CAMK Ser/Thr protein kinase family. The cofactor is Mg(2+). Mn(2+) serves as cofactor. Post-translationally, autophosphorylated at Ser-166. Phosphorylation at Thr-168 by PDPK1 activates the serine/threonine protein kinase activity.

It localises to the cell projection. The protein localises to the cilium. It is found in the flagellum. The catalysed reaction is L-seryl-[protein] + ATP = O-phospho-L-seryl-[protein] + ADP + H(+). It catalyses the reaction L-threonyl-[protein] + ATP = O-phospho-L-threonyl-[protein] + ADP + H(+). With respect to regulation, activated by phosphorylation on Thr-168 by PDPK1. Functionally, serine/threonine protein kinase required for spermatid development and male fertility. This chain is Testis-specific serine/threonine-protein kinase 3, found in Homo sapiens (Human).